Here is a 1416-residue protein sequence, read N- to C-terminus: Isonitrile lipopeptide synthase (1416 aa).

A coiled-coil region spans residues 188–215 (LRETAKVAEALRRQADAVQRELTAEAGQ). A Carrier domain is found at 965 to 1028 (RVWSRHLGRP…NLVCDLGSNP (64 aa)). An O-(pantetheine 4'-phosphoryl)serine modification is found at S988.

The protein belongs to the ATP-dependent AMP-binding enzyme family. Requires pantetheine 4'-phosphate as cofactor.

It carries out the reaction 2 a (3R)-3-isocyanyl-fatty acyl-[ACP] + L-lysine + ATP + 2 NADPH = an isonitrile lipopeptide + 2 holo-[ACP] + AMP + diphosphate + 2 NADP(+). Functionally, nonribosomal peptide synthetase (NRPS) involved in the biosynthesis of a unique class of isonitrile lipopeptides (INLPs) that seem to play a role in metal acquisition in M.marinum. Catalyzes the final step in the pathway, i.e. the condensation of a (3R)-3-isocyanyl-fatty acyl-[ACP] to both amino groups of a lysine, producing isonitrile lipopeptides. The protein is Isonitrile lipopeptide synthase of Mycobacterium marinum (strain ATCC BAA-535 / M).